A 126-amino-acid chain; its full sequence is Holo-[acyl-carrier-protein] synthase (126 aa).

The Mg(2+) site is built by Asp-9 and Glu-58.

Belongs to the P-Pant transferase superfamily. AcpS family. It depends on Mg(2+) as a cofactor.

It is found in the cytoplasm. It catalyses the reaction apo-[ACP] + CoA = holo-[ACP] + adenosine 3',5'-bisphosphate + H(+). Its function is as follows. Transfers the 4'-phosphopantetheine moiety from coenzyme A to a Ser of acyl-carrier-protein. The chain is Holo-[acyl-carrier-protein] synthase from Photorhabdus laumondii subsp. laumondii (strain DSM 15139 / CIP 105565 / TT01) (Photorhabdus luminescens subsp. laumondii).